A 1378-amino-acid polypeptide reads, in one-letter code: DNA-directed RNA polymerase subunit beta (1378 aa).

The protein belongs to the RNA polymerase beta chain family. In terms of assembly, the RNAP catalytic core consists of 2 alpha, 1 beta, 1 beta' and 1 omega subunit. When a sigma factor is associated with the core the holoenzyme is formed, which can initiate transcription.

The catalysed reaction is RNA(n) + a ribonucleoside 5'-triphosphate = RNA(n+1) + diphosphate. Its function is as follows. DNA-dependent RNA polymerase catalyzes the transcription of DNA into RNA using the four ribonucleoside triphosphates as substrates. This Sorangium cellulosum (strain So ce56) (Polyangium cellulosum (strain So ce56)) protein is DNA-directed RNA polymerase subunit beta.